Reading from the N-terminus, the 142-residue chain is Large ribosomal subunit protein uL11 (142 aa).

The protein belongs to the universal ribosomal protein uL11 family. As to quaternary structure, part of the ribosomal stalk of the 50S ribosomal subunit. Interacts with L10 and the large rRNA to form the base of the stalk. L10 forms an elongated spine to which L12 dimers bind in a sequential fashion forming a multimeric L10(L12)X complex. Post-translationally, one or more lysine residues are methylated.

Its function is as follows. Forms part of the ribosomal stalk which helps the ribosome interact with GTP-bound translation factors. This is Large ribosomal subunit protein uL11 from Glaesserella parasuis serovar 5 (strain SH0165) (Haemophilus parasuis).